A 1592-amino-acid chain; its full sequence is ABC transporter ATP-binding protein/permease VMR1 (1592 aa).

Topologically, residues 1 to 33 (MGTDPLIIRNNGSFWEVDDFTRLGRTQLLSYYL) are vacuolar. N-linked (GlcNAc...) asparagine glycosylation occurs at Asn11. The chain crosses the membrane as a helical span at residues 34–54 (PLAIIASIGIFALCRSGLSRY). At 55 to 74 (VRSAECDLVNEYLFGAQEER) the chain is on the cytoplasmic side. The chain crosses the membrane as a helical span at residues 75–95 (KEDNSIERLLRNSNTQANYVN). Topologically, residues 96-100 (VKKQG) are vacuolar. Residues 101 to 121 (RILKLRHFDITTIDVKQIDAK) form a helical membrane-spanning segment. Residues 122-131 (NHGGLTFSRP) are Cytoplasmic-facing. Residues 132–152 (STSDHLRKSSEIVLMSLQIIG) form a helical membrane-spanning segment. Residues 153-170 (LSFLRVTKINIELTNRDV) are Vacuolar-facing. The chain crosses the membrane as a helical span at residues 171–191 (TTLLLFWLILLSLSILRVYKR). Residues 192–329 (STNLWAICFT…NKHINNLTLA (138 aa)) lie on the Cytoplasmic side of the membrane. Residues 330–350 (LFESFKTYLLIGMLWVLVNSI) form a helical membrane-spanning segment. The ABC transmembrane type-1 1 domain maps to 338–632 (LLIGMLWVLV…LSNMLSFINQ (295 aa)). At 351 to 379 (VNLLPTILMKRFLEIVDNPNRSSSCMNLA) the chain is on the vacuolar side. Asn370 carries an N-linked (GlcNAc...) asparagine glycan. A helical membrane pass occupies residues 380-400 (WLYIIGMFICRLTLAICNSQG). At 401-465 (QFVSDKICLR…SFKVSELANY (65 aa)) the chain is on the cytoplasmic side. The helical transmembrane segment at 466–486 (LYVTVQAVIMIIVVVGLLFNF) threads the bilayer. Topologically, residues 487–489 (LGV) are vacuolar. A helical membrane pass occupies residues 490–510 (SAFAGISIILVMFPLNFLLAN). The Cytoplasmic portion of the chain corresponds to 511 to 572 (LLGKFQKQTL…SLLKKSLVWS (62 aa)). Residues 573–593 (VTSFLWFVTPTLVTGVTFAIC) form a helical membrane-spanning segment. Topologically, residues 594–614 (TFVQHEDLNAPLAFTTLSLFT) are vacuolar. Residues 615–635 (LLKTPLDQLSNMLSFINQSKV) traverse the membrane as a helical segment. Over 636-989 (SLKRISDFLR…ALTALFALYI (354 aa)) the chain is Cytoplasmic. The ABC transporter 1 domain maps to 664-908 (IEFKNATLTW…GLFKEKYVQL (245 aa)). Position 702–709 (702–709 (GSTGSGKS)) interacts with ATP. The 302-residue stretch at 981–1282 (LTALFALYIT…LVRLYSTFEM (302 aa)) folds into the ABC transmembrane type-1 2 domain. A helical membrane pass occupies residues 990-1010 (TAQILFISQSWWIRHWVNDTN). Over 1011 to 1051 (VRINAPGFAMDTLPLKGMTDSSKNKHNAFYYLTVYFLIGII) the chain is Vacuolar. Residues 1052 to 1072 (QAMLGGFKTMMTFLSGMRASR) traverse the membrane as a helical segment. Over 1073–1115 (KIFNNLLDLVLHAQIRFFDVTPVGRIMNRFSKDIEGVDQELIP) the chain is Cytoplasmic. Residues 1116 to 1136 (YLEVTIFCLIQCASIIFLITV) form a helical membrane-spanning segment. Position 1137 (Ile1137) is a topological domain, vacuolar. The chain crosses the membrane as a helical span at residues 1138–1158 (TPRFLTVAVIVFVLYFFVGKW). Residues 1159–1229 (YLTASRELKR…VTVKWFSFRV (71 aa)) are Cytoplasmic-facing. A helical membrane pass occupies residues 1230–1250 (DMIGAFIVLASGSFILLNIAN). The Vacuolar portion of the chain corresponds to 1251–1252 (ID). The helical transmembrane segment at 1253–1273 (SGLAGISLTYAILFTDGALWL) threads the bilayer. Over 1274-1592 (VRLYSTFEMN…IAKQSSKMMK (319 aa)) the chain is Cytoplasmic. The 250-residue stretch at 1323–1572 (IEIENLSLRY…ERGIFYSMCR (250 aa)) folds into the ABC transporter 2 domain. 1357-1364 (GRTGAGKS) provides a ligand contact to ATP.

It belongs to the ABC transporter superfamily. As to quaternary structure, ABC transporter which may be involved in multidrug resistance.

It localises to the vacuole membrane. The polypeptide is ABC transporter ATP-binding protein/permease VMR1 (VMR1) (Saccharomyces cerevisiae (strain ATCC 204508 / S288c) (Baker's yeast)).